The sequence spans 37 residues: Unknown protein 25 (37 aa).

The polypeptide is Unknown protein 25 (Pseudotsuga menziesii (Douglas-fir)).